The sequence spans 155 residues: SsrA-binding protein (155 aa).

Positions 135 to 155 are disordered; sequence KRQDIKQRDVERETRREIMRH.

It belongs to the SmpB family.

The protein localises to the cytoplasm. In terms of biological role, required for rescue of stalled ribosomes mediated by trans-translation. Binds to transfer-messenger RNA (tmRNA), required for stable association of tmRNA with ribosomes. tmRNA and SmpB together mimic tRNA shape, replacing the anticodon stem-loop with SmpB. tmRNA is encoded by the ssrA gene; the 2 termini fold to resemble tRNA(Ala) and it encodes a 'tag peptide', a short internal open reading frame. During trans-translation Ala-aminoacylated tmRNA acts like a tRNA, entering the A-site of stalled ribosomes, displacing the stalled mRNA. The ribosome then switches to translate the ORF on the tmRNA; the nascent peptide is terminated with the 'tag peptide' encoded by the tmRNA and targeted for degradation. The ribosome is freed to recommence translation, which seems to be the essential function of trans-translation. This is SsrA-binding protein from Oleidesulfovibrio alaskensis (strain ATCC BAA-1058 / DSM 17464 / G20) (Desulfovibrio alaskensis).